The following is a 513-amino-acid chain: ATP synthase subunit alpha (513 aa).

169–176 lines the ATP pocket; it reads GDRQCGKT.

Belongs to the ATPase alpha/beta chains family. As to quaternary structure, F-type ATPases have 2 components, CF(1) - the catalytic core - and CF(0) - the membrane proton channel. CF(1) has five subunits: alpha(3), beta(3), gamma(1), delta(1), epsilon(1). CF(0) has three main subunits: a(1), b(2) and c(9-12). The alpha and beta chains form an alternating ring which encloses part of the gamma chain. CF(1) is attached to CF(0) by a central stalk formed by the gamma and epsilon chains, while a peripheral stalk is formed by the delta and b chains.

The protein resides in the cell inner membrane. The enzyme catalyses ATP + H2O + 4 H(+)(in) = ADP + phosphate + 5 H(+)(out). Functionally, produces ATP from ADP in the presence of a proton gradient across the membrane. The alpha chain is a regulatory subunit. The protein is ATP synthase subunit alpha of Burkholderia vietnamiensis (strain G4 / LMG 22486) (Burkholderia cepacia (strain R1808)).